The sequence spans 688 residues: Elongation factor G (688 aa).

The tr-type G domain maps to glutamate 8–leucine 282. GTP contacts are provided by residues alanine 17 to threonine 24, aspartate 81 to histidine 85, and asparagine 135 to aspartate 138. Residues leucine 282–asparagine 305 form a disordered region.

The protein belongs to the TRAFAC class translation factor GTPase superfamily. Classic translation factor GTPase family. EF-G/EF-2 subfamily.

Its subcellular location is the cytoplasm. Catalyzes the GTP-dependent ribosomal translocation step during translation elongation. During this step, the ribosome changes from the pre-translocational (PRE) to the post-translocational (POST) state as the newly formed A-site-bound peptidyl-tRNA and P-site-bound deacylated tRNA move to the P and E sites, respectively. Catalyzes the coordinated movement of the two tRNA molecules, the mRNA and conformational changes in the ribosome. The protein is Elongation factor G of Clostridium kluyveri (strain NBRC 12016).